The primary structure comprises 290 residues: Small ribosomal subunit protein uS11 (290 aa).

The segment at 243-271 is disordered; sequence DWEAAPAGFPATGEWSDAAPGAAAPNWDA. The span at 257-271 shows a compositional bias: low complexity; the sequence is WSDAAPGAAAPNWDA.

This sequence belongs to the universal ribosomal protein uS2 family. As to quaternary structure, component of the small ribosomal subunit (SSU). Mature N.crassa ribosomes consist of a small (40S) and a large (60S) subunit. The 40S small subunit contains 1 molecule of ribosomal RNA (18S rRNA) and at least 32 different proteins. The large 60S subunit contains 3 rRNA molecules (26S, 5.8S and 5S rRNA) and at least 42 different proteins. Interacts with rps21.

The protein localises to the cytoplasm. Component of the ribosome, a large ribonucleoprotein complex responsible for the synthesis of proteins in the cell. The small ribosomal subunit (SSU) binds messenger RNAs (mRNAs) and translates the encoded message by selecting cognate aminoacyl-transfer RNA (tRNA) molecules. The large subunit (LSU) contains the ribosomal catalytic site termed the peptidyl transferase center (PTC), which catalyzes the formation of peptide bonds, thereby polymerizing the amino acids delivered by tRNAs into a polypeptide chain. The nascent polypeptides leave the ribosome through a tunnel in the LSU and interact with protein factors that function in enzymatic processing, targeting, and the membrane insertion of nascent chains at the exit of the ribosomal tunnel. uS2 is required for the assembly and/or stability of the 40S ribosomal subunit. Required for the processing of the 20S rRNA-precursor to mature 18S rRNA in a late step of the maturation of 40S ribosomal subunits. This Neurospora crassa (strain ATCC 24698 / 74-OR23-1A / CBS 708.71 / DSM 1257 / FGSC 987) protein is Small ribosomal subunit protein uS11.